The following is a 685-amino-acid chain: Heat shock protein homolog SSE1 (685 aa).

The disordered stretch occupies residues 651-685 (QALRSNQEASKMADLSAKLAAQRKAEAEAKENAKE). Positions 673–685 (RKAEAEAKENAKE) are enriched in basic and acidic residues.

It belongs to the heat shock protein 70 family.

The protein resides in the cytoplasm. This chain is Heat shock protein homolog SSE1 (SSE1), found in Naumovozyma castellii (Yeast).